The sequence spans 511 residues: Histidine ammonia-lyase (511 aa).

A cross-link (5-imidazolinone (Ala-Gly)) is located at residues 143–145 (ASG). The residue at position 144 (serine 144) is a 2,3-didehydroalanine (Ser).

This sequence belongs to the PAL/histidase family. In terms of processing, contains an active site 4-methylidene-imidazol-5-one (MIO), which is formed autocatalytically by cyclization and dehydration of residues Ala-Ser-Gly.

It localises to the cytoplasm. It carries out the reaction L-histidine = trans-urocanate + NH4(+). Its pathway is amino-acid degradation; L-histidine degradation into L-glutamate; N-formimidoyl-L-glutamate from L-histidine: step 1/3. This Idiomarina loihiensis (strain ATCC BAA-735 / DSM 15497 / L2-TR) protein is Histidine ammonia-lyase.